Reading from the N-terminus, the 342-residue chain is RNA 3'-terminal phosphate cyclase (342 aa).

Residues Q103 and 283 to 287 (YLADQ) each bind ATP. H308 functions as the Tele-AMP-histidine intermediate in the catalytic mechanism.

It belongs to the RNA 3'-terminal cyclase family. Type 1 subfamily.

It localises to the cytoplasm. The catalysed reaction is a 3'-end 3'-phospho-ribonucleotide-RNA + ATP = a 3'-end 2',3'-cyclophospho-ribonucleotide-RNA + AMP + diphosphate. Functionally, catalyzes the conversion of 3'-phosphate to a 2',3'-cyclic phosphodiester at the end of RNA. The mechanism of action of the enzyme occurs in 3 steps: (A) adenylation of the enzyme by ATP; (B) transfer of adenylate to an RNA-N3'P to produce RNA-N3'PP5'A; (C) and attack of the adjacent 2'-hydroxyl on the 3'-phosphorus in the diester linkage to produce the cyclic end product. The biological role of this enzyme is unknown but it is likely to function in some aspects of cellular RNA processing. This is RNA 3'-terminal phosphate cyclase from Shigella dysenteriae serotype 1 (strain Sd197).